The sequence spans 250 residues: Histone H1.3 (250 aa).

Disordered regions lie at residues 17–53 and 104–250; these read AASG…QMVD and QTKG…ATKK. A compositionally biased stretch (low complexity) spans 27-42; that stretch reads KKAAATPKSKKSTAAP. The region spanning 44–118 is the H15 domain; the sequence is SHPPTQQMVD…GASGSFKLSR (75 aa). Positions 120 to 133 are enriched in basic and acidic residues; the sequence is AKKDAKPKASAVEK. A compositionally biased stretch (low complexity) spans 138-161; the sequence is VNASAAAATKRSSSTSTTKKAAGA. Residues 174–191 are compositionally biased toward basic and acidic residues; it reads KNVEKKKADKEKAKDAKK. The span at 192-234 shows a compositional bias: low complexity; it reads TGTIKAKLTTAKAKSSATKPKTPKPKTTSAKPKKVVSATTPKK. Over residues 235–250 the composition is skewed to basic residues; it reads TAVKKPKAKTASATKK.

This sequence belongs to the histone H1/H5 family.

The protein resides in the nucleus. The protein localises to the chromosome. Functionally, histones H1 are necessary for the condensation of nucleosome chains into higher-order structures. The polypeptide is Histone H1.3 (His1.3) (Drosophila virilis (Fruit fly)).